Consider the following 252-residue polypeptide: Flap endonuclease Xni (252 aa).

Aspartate 103 contacts Mg(2+). In terms of domain architecture, 5'-3' exonuclease spans 159-248; the sequence is VLPEQLPDYW…LKGNLQQLRL (90 aa). K(+)-binding residues include leucine 170, alanine 171, proline 179, isoleucine 181, and isoleucine 184. The tract at residues 183–188 is interaction with DNA; that stretch reads GIGPKT.

It belongs to the Xni family. Requires Mg(2+) as cofactor. K(+) is required as a cofactor.

Has flap endonuclease activity. During DNA replication, flap endonucleases cleave the 5'-overhanging flap structure that is generated by displacement synthesis when DNA polymerase encounters the 5'-end of a downstream Okazaki fragment. In Photorhabdus laumondii subsp. laumondii (strain DSM 15139 / CIP 105565 / TT01) (Photorhabdus luminescens subsp. laumondii), this protein is Flap endonuclease Xni.